The sequence spans 863 residues: Penicillin-binding protein 1A (863 aa).

Topologically, residues 1-28 (MTENRDNKTSQSEKTTQKKKKKKFKAFK) are cytoplasmic. The helical; Signal-anchor for type II membrane protein transmembrane segment at 29–49 (IILITFITLIVISLVTAIGIT) threads the bilayer. The Extracellular portion of the chain corresponds to 50–863 (LAIIKTSPDI…KPIIRPKKHF (814 aa)). The segment at 71–248 (SKIYDDKGEL…PSVYYPYSRT (178 aa)) is transglycosylase. E110 acts as the Proton donor; for transglycosylase activity in catalysis. A transpeptidase region spans residues 392–674 (ASAVLTDYHT…AAALFGKIMN (283 aa)). Catalysis depends on S431, which acts as the Acyl-ester intermediate; for transpeptidase activity. The tract at residues 774–863 (DDDMYVLPDK…KPIIRPKKHF (90 aa)) is disordered. The span at 808-836 (EDATNEASTEPSPNTDTVPEDSTNNLDPT) shows a compositional bias: polar residues. Residues 837–846 (KNTEKKPSDK) show a composition bias toward basic and acidic residues. Positions 847–863 (KNKKHVIKPIIRPKKHF) are enriched in basic residues.

In the N-terminal section; belongs to the glycosyltransferase 51 family. It in the C-terminal section; belongs to the transpeptidase family.

The protein resides in the cell membrane. The enzyme catalyses [GlcNAc-(1-&gt;4)-Mur2Ac(oyl-L-Ala-gamma-D-Glu-L-Lys-D-Ala-D-Ala)](n)-di-trans,octa-cis-undecaprenyl diphosphate + beta-D-GlcNAc-(1-&gt;4)-Mur2Ac(oyl-L-Ala-gamma-D-Glu-L-Lys-D-Ala-D-Ala)-di-trans,octa-cis-undecaprenyl diphosphate = [GlcNAc-(1-&gt;4)-Mur2Ac(oyl-L-Ala-gamma-D-Glu-L-Lys-D-Ala-D-Ala)](n+1)-di-trans,octa-cis-undecaprenyl diphosphate + di-trans,octa-cis-undecaprenyl diphosphate + H(+). The catalysed reaction is Preferential cleavage: (Ac)2-L-Lys-D-Ala-|-D-Ala. Also transpeptidation of peptidyl-alanyl moieties that are N-acyl substituents of D-alanine.. The protein operates within cell wall biogenesis; peptidoglycan biosynthesis. In terms of biological role, cell wall formation. Synthesis of cross-linked peptidoglycan from the lipid intermediates. The enzyme has a penicillin-insensitive transglycosylase N-terminal domain (formation of linear glycan strands) and a penicillin-sensitive transpeptidase C-terminal domain (cross-linking of the peptide subunits). This chain is Penicillin-binding protein 1A (pbpA), found in Clostridium novyi (strain NT).